The following is a 109-amino-acid chain: Spermidine export protein MdtI (109 aa).

The next 4 helical transmembrane spans lie at 6–26, 36–56, 64–84, and 88–108; these read WIHA…NVFL, IYGI…SQAV, AYAL…WVLF, and LNNK…LIKL.

Belongs to the drug/metabolite transporter (DMT) superfamily. Small multidrug resistance (SMR) (TC 2.A.7.1) family. MdtI subfamily. In terms of assembly, forms a complex with MdtJ.

Its subcellular location is the cell inner membrane. In terms of biological role, catalyzes the excretion of spermidine. This is Spermidine export protein MdtI from Klebsiella pneumoniae subsp. pneumoniae (strain ATCC 700721 / MGH 78578).